Here is a 662-residue protein sequence, read N- to C-terminus: Glutathione hydrolase 7 (662 aa).

The Cytoplasmic portion of the chain corresponds to 1–106 (MAAENEASQE…ASECSCRQDG (106 aa)). A phosphoserine mark is found at Ser-17, Ser-72, Ser-79, and Ser-83. The tract at residues 26–90 (SFPRLPEDEP…DGSPLRETRK (65 aa)) is disordered. Positions 72 to 83 (SSSSEMGSQDGS) are enriched in low complexity. The chain crosses the membrane as a helical; Signal-anchor for type II membrane protein span at residues 107–127 (LTVIVTACLTFATGVTVALIM). Topologically, residues 128-662 (QIYFGDPQIF…SPDAAGATIL (535 aa)) are extracellular. 9 N-linked (GlcNAc...) asparagine glycosylation sites follow: Asn-198, Asn-267, Asn-283, Asn-330, Asn-353, Asn-394, Asn-452, Asn-519, and Asn-586.

This sequence belongs to the gamma-glutamyltransferase family. In terms of assembly, heterodimer composed of the light and heavy chains. The active site is located in the light chain. Cleaved by autocatalysis into a large and a small subunit and the autocatalytic cleavage is essential to the functional activation of the enzyme.

It localises to the membrane. It catalyses the reaction an N-terminal (5-L-glutamyl)-[peptide] + an alpha-amino acid = 5-L-glutamyl amino acid + an N-terminal L-alpha-aminoacyl-[peptide]. The enzyme catalyses glutathione + H2O = L-cysteinylglycine + L-glutamate. The catalysed reaction is an S-substituted glutathione + H2O = an S-substituted L-cysteinylglycine + L-glutamate. Its pathway is sulfur metabolism; glutathione metabolism. In terms of biological role, hydrolyzes and transfers gamma-glutamyl moieties from glutathione and other gamma-glutamyl compounds to acceptors. The protein is Glutathione hydrolase 7 of Bos taurus (Bovine).